We begin with the raw amino-acid sequence, 408 residues long: Arginine biosynthesis bifunctional protein ArgJ (408 aa).

Threonine 158, lysine 184, threonine 195, glutamate 281, asparagine 403, and threonine 408 together coordinate substrate. Threonine 195 functions as the Nucleophile in the catalytic mechanism.

This sequence belongs to the ArgJ family. As to quaternary structure, heterotetramer of two alpha and two beta chains.

It is found in the cytoplasm. It catalyses the reaction N(2)-acetyl-L-ornithine + L-glutamate = N-acetyl-L-glutamate + L-ornithine. The catalysed reaction is L-glutamate + acetyl-CoA = N-acetyl-L-glutamate + CoA + H(+). Its pathway is amino-acid biosynthesis; L-arginine biosynthesis; L-ornithine and N-acetyl-L-glutamate from L-glutamate and N(2)-acetyl-L-ornithine (cyclic): step 1/1. It functions in the pathway amino-acid biosynthesis; L-arginine biosynthesis; N(2)-acetyl-L-ornithine from L-glutamate: step 1/4. In terms of biological role, catalyzes two activities which are involved in the cyclic version of arginine biosynthesis: the synthesis of N-acetylglutamate from glutamate and acetyl-CoA as the acetyl donor, and of ornithine by transacetylation between N(2)-acetylornithine and glutamate. The chain is Arginine biosynthesis bifunctional protein ArgJ from Bacillus cereus (strain ZK / E33L).